Here is a 544-residue protein sequence, read N- to C-terminus: CTP synthase (544 aa).

The segment at 1–267 (MSKFVFVTGG…GDLLVSRLHL (267 aa)) is amidoligase domain. S13 lines the CTP pocket. S13 lines the UTP pocket. 14–19 (SVGKGI) is a binding site for ATP. Y54 is a binding site for L-glutamine. D71 is a binding site for ATP. Residues D71 and E141 each coordinate Mg(2+). CTP-binding positions include 148–150 (DIE), 188–193 (KTKPTQ), and K224. Residues 188–193 (KTKPTQ) and K224 each bind UTP. In terms of domain architecture, Glutamine amidotransferase type-1 spans 299–534 (YVELKDAYYS…INAAKKVIRD (236 aa)). Residue G354 coordinates L-glutamine. The active-site Nucleophile; for glutamine hydrolysis is the C381. L-glutamine-binding positions include 382–385 (LGMQ), E405, and R462. Active-site residues include H507 and E509.

The protein belongs to the CTP synthase family. As to quaternary structure, homotetramer.

It catalyses the reaction UTP + L-glutamine + ATP + H2O = CTP + L-glutamate + ADP + phosphate + 2 H(+). The catalysed reaction is L-glutamine + H2O = L-glutamate + NH4(+). It carries out the reaction UTP + NH4(+) + ATP = CTP + ADP + phosphate + 2 H(+). The protein operates within pyrimidine metabolism; CTP biosynthesis via de novo pathway; CTP from UDP: step 2/2. With respect to regulation, allosterically activated by GTP, when glutamine is the substrate; GTP has no effect on the reaction when ammonia is the substrate. The allosteric effector GTP functions by stabilizing the protein conformation that binds the tetrahedral intermediate(s) formed during glutamine hydrolysis. Inhibited by the product CTP, via allosteric rather than competitive inhibition. Functionally, catalyzes the ATP-dependent amination of UTP to CTP with either L-glutamine or ammonia as the source of nitrogen. Regulates intracellular CTP levels through interactions with the four ribonucleotide triphosphates. This Dehalococcoides mccartyi (strain ATCC BAA-2266 / KCTC 15142 / 195) (Dehalococcoides ethenogenes (strain 195)) protein is CTP synthase.